Here is a 404-residue protein sequence, read N- to C-terminus: Zinc metalloprotease Rip1 (404 aa).

A helical transmembrane segment spans residues Met-1 to His-21. Position 21 (His-21) interacts with Zn(2+). Residue Glu-22 is part of the active site. His-25 contacts Zn(2+). The chain crosses the membrane as a helical span at residues Pro-104–Leu-124. One can recognise a PDZ domain in the interval Val-121 to Gly-203. Zn(2+) is bound at residue Asp-202. Transmembrane regions (helical) follow at residues Leu-313–Leu-333 and Leu-373–Thr-393.

The protein belongs to the peptidase M50B family. The cofactor is Zn(2+).

Its subcellular location is the cell membrane. Its function is as follows. A probable intramembrane site-2 protease (S2P) that cleaves type-2 transmembrane proteins within their membrane-spanning domains. Cleaves PbpB (PBP3, FtsI); cleavage is inhibited by Wag31-PbpB interaction. Probably also cleaves anti-sigma factors RskA, RslA and RsmA. In terms of biological role, regulated intramembrane proteolysis (RIP) occurs when an extracytoplasmic signal (possibly oxidative stress) triggers a concerted proteolytic cascade to transmit information and elicit cellular responses. The membrane-spanning regulatory substrate protein (includes anti-sigma factors RskA, RslA, RsmA, and PbpB in M.tuberculosis) is first cut extracytoplasmically (site-1 protease, S1P), then within the membrane itself (site-2 protease, S2P, this entry), while cytoplasmic proteases finish degrading the regulatory protein, liberating the effector protein (ECF sigma factors SigK, SigL and SigM). The sequence is that of Zinc metalloprotease Rip1 (rip1) from Mycobacterium bovis (strain BCG / Pasteur 1173P2).